The chain runs to 349 residues: Flagellar P-ring protein (349 aa).

A signal peptide spans 1–16 (MKYFFIIALLLSSLYS).

It belongs to the FlgI family. In terms of assembly, the basal body constitutes a major portion of the flagellar organelle and consists of four rings (L,P,S, and M) mounted on a central rod.

It localises to the periplasm. Its subcellular location is the bacterial flagellum basal body. In terms of biological role, assembles around the rod to form the L-ring and probably protects the motor/basal body from shearing forces during rotation. The polypeptide is Flagellar P-ring protein (Aliarcobacter butzleri (strain RM4018) (Arcobacter butzleri)).